A 735-amino-acid polypeptide reads, in one-letter code: MATKLFPKFSQGLAQDPTTRRIWFGLAVAHDFESHDGMTEENLYQKIFASHFGQLAIIFLWTSGNLFHVAWQGNFEQWVTDPVHVRPIAHAIWDPHFGTSAVEAFTRGGASGPVNIATSGVYQWWYTIGMRTNQDLFTGSVFLALVSAVFLFAGWLHLQPNFQPSLSWFKDAESRLNHHLSGLFGVSSLAWTGHLVHVAIPESRGRHVGWDNFLSVLPHPQGLAPFWSGNWAAYAQNPDTASHAFGTSEGSGQAILTFLGGFHPQTQSLWLSDMAHHHLAIAVIFIVAGHMYRTNFGIGHRLQAILDAHVPPSGNLGAGHKGLFDTVNNSLHFQLGLALASVGTITSMIAQHIYSLPPYAYLAIDFTTQAALYTHHQYIAGFIMCGAFAHGAIFFIRDYDPEANKGNVLARILDHKEAIISHLSWVTLFLGFHTLGLYVHNDVMQAFGTPEKQILIEPVFAQWIQAAQGKTVYGFDLLLSSSTSVASTAGQSVWLPGWLDAINNNQNTLFLTIGPGDFLVHHAIALGLHTTTLILVKGALDARGSKLMPDKKDFGYSFPCDGPGRGGTCDISAYDAFYLAVFWMLNTIGWVTFYFHWKHLALWQGNVAQFDESSTYLMGWLRDYLWLNSSQLINGYNPFGMNSLSVWAFCFLFGHLIYATGFMFLISWRGYWQELIETLVWAHEKTPLANIVYWKDKPVALSIVQARLVGLVHFSVGYIFTYAAFLIASTSGRFG.

A run of 8 helical transmembrane segments spans residues 47-70 (IFAS…FHVA), 136-159 (LFTG…LHLQ), 176-200 (LNHH…HVAI), 274-292 (MAHH…GHMY), 331-354 (LHFQ…QHIY), 370-396 (AALY…IFFI), 418-440 (AIIS…LYVH), and 518-536 (FLVH…LILV). Positions 560 and 569 each coordinate [4Fe-4S] cluster. 2 consecutive transmembrane segments (helical) span residues 576-597 (AFYL…YFHW) and 644-666 (LSVW…MFLI). 3 residues coordinate chlorophyll a: histidine 655, methionine 663, and tyrosine 671. Tryptophan 672 provides a ligand contact to phylloquinone. A helical transmembrane segment spans residues 708–728 (LVGLVHFSVGYIFTYAAFLIA).

This sequence belongs to the PsaA/PsaB family. The PsaA/B heterodimer binds the P700 chlorophyll special pair and subsequent electron acceptors. PSI consists of a core antenna complex that captures photons, and an electron transfer chain that converts photonic excitation into a charge separation. The eukaryotic PSI reaction center is composed of at least 11 subunits. P700 is a chlorophyll a/chlorophyll a' dimer, A0 is one or more chlorophyll a, A1 is one or both phylloquinones and FX is a shared 4Fe-4S iron-sulfur center. serves as cofactor.

The protein resides in the plastid. Its subcellular location is the chloroplast thylakoid membrane. The catalysed reaction is reduced [plastocyanin] + hnu + oxidized [2Fe-2S]-[ferredoxin] = oxidized [plastocyanin] + reduced [2Fe-2S]-[ferredoxin]. Its function is as follows. PsaA and PsaB bind P700, the primary electron donor of photosystem I (PSI), as well as the electron acceptors A0, A1 and FX. PSI is a plastocyanin/cytochrome c6-ferredoxin oxidoreductase, converting photonic excitation into a charge separation, which transfers an electron from the donor P700 chlorophyll pair to the spectroscopically characterized acceptors A0, A1, FX, FA and FB in turn. Oxidized P700 is reduced on the lumenal side of the thylakoid membrane by plastocyanin or cytochrome c6. The polypeptide is Photosystem I P700 chlorophyll a apoprotein A2 (Chlamydomonas moewusii (Chlamydomonas eugametos)).